The primary structure comprises 711 residues: Choline transporter-like protein 2 (711 aa).

Residues 1–33 lie on the Cytoplasmic side of the membrane; it reads MGDERPHYYGKHGTPQKYDPTFKGPIYNRGCTD. Thr-14 carries the phosphothreonine modification. A helical transmembrane segment spans residues 34 to 54; the sequence is VICCVFLLVAIVGYVAVGIIA. The Extracellular segment spans residues 55–232; sequence WTHGDPRKVI…RIFEDYTVSW (178 aa). N-linked (GlcNAc...) asparagine glycans are attached at residues Asn-187 and Asn-200. A helical transmembrane segment spans residues 233–253; the sequence is YWIIIGLVIAMAMSLLFIILL. The Cytoplasmic segment spans residues 254–256; that stretch reads RFL. Residues 257–277 form a helical membrane-spanning segment; the sequence is AGIMVWVMIIMVILVLGYGIF. The Extracellular portion of the chain corresponds to 278–315; that stretch reads HCYMEYSRLRGEAGSDVSLVDLGFQTDFRVYLHLRQTW. Residues 316–336 traverse the membrane as a helical segment; it reads LAFMIILSILEVIIILLLIFL. Over 337–364 the chain is Cytoplasmic; that stretch reads RKRILIAIALIKEASRAVGYVMCTMLYP. Residues 365 to 385 traverse the membrane as a helical segment; it reads LVTFFLLCLCIAYWASTAVFL. The Extracellular segment spans residues 386–440; the sequence is STSNEAVYKIFDDGLCPFTAKTCNPETFPSSNESRQCPNARCQFAFYGGESGYHR. Asn-417 carries N-linked (GlcNAc...) asparagine glycosylation. The helical transmembrane segment at 441 to 461 threads the bilayer; the sequence is ALLGLQIFNAFMFFWLANFVL. The Cytoplasmic portion of the chain corresponds to 462–504; the sequence is ALGQVTLAGAFASYYWALRKPDDLPAFPLFSAFGRALRYHTGS. Residues 505–525 form a helical membrane-spanning segment; sequence LAFGALILAIVQIIRVILEYL. The Extracellular portion of the chain corresponds to 526–563; that stretch reads DQRLKAAENKFAKCLMTCLKCCFWCLEKFIKFLNRNAY. A helical membrane pass occupies residues 564-584; sequence IMIAIYGTNFCTSARNAFFLL. The Cytoplasmic portion of the chain corresponds to 585 to 599; sequence MRNIIRVAVLDKVTD. A helical transmembrane segment spans residues 600 to 620; that stretch reads FLFLLGKLLIVGSVGILAFFF. At 621 to 638 the chain is on the extracellular side; that stretch reads FTHRIRIVQDTAPPLNYY. The helical transmembrane segment at 639 to 659 threads the bilayer; it reads WVPILTVIVGSYLIAHGFFSV. Residues 660–711 are Cytoplasmic-facing; the sequence is YGMCVDTLFLCFCEDLERNDGSQERPYFMSPELRDILLKGSAEEGKRAEAEE.

This sequence belongs to the CTL (choline transporter-like) family. As to quaternary structure, interacts with COCH. N-glycosylated.

Its subcellular location is the cell membrane. The protein localises to the mitochondrion outer membrane. It carries out the reaction choline(out) + n H(+)(in) = choline(in) + n H(+)(out). It catalyses the reaction ethanolamine(out) + n H(+)(in) = ethanolamine(in) + n H(+)(out). Choline/H+ antiporter, mainly in mitochodria. Also acts as a low-affinity ethanolamine/H+ antiporter, regulating the supply of extracellular ethanolamine (Etn) for the CDP-Etn pathway, redistribute intracellular Etn and balance the CDP-Cho and CDP-Etn arms of the Kennedy pathway. This Pongo abelii (Sumatran orangutan) protein is Choline transporter-like protein 2 (SLC44A2).